A 158-amino-acid polypeptide reads, in one-letter code: 2-C-methyl-D-erythritol 2,4-cyclodiphosphate synthase (158 aa).

Residues Asp9 and His11 each contribute to the a divalent metal cation site. 4-CDP-2-C-methyl-D-erythritol 2-phosphate-binding positions include 9–11 (DVH) and 35–36 (HS). Residue His43 coordinates a divalent metal cation. 4-CDP-2-C-methyl-D-erythritol 2-phosphate is bound by residues 57–59 (DIG), 62–66 (FPDTD), 133–136 (TTTE), Phe140, and Arg143.

This sequence belongs to the IspF family. In terms of assembly, homotrimer. Requires a divalent metal cation as cofactor.

It carries out the reaction 4-CDP-2-C-methyl-D-erythritol 2-phosphate = 2-C-methyl-D-erythritol 2,4-cyclic diphosphate + CMP. It functions in the pathway isoprenoid biosynthesis; isopentenyl diphosphate biosynthesis via DXP pathway; isopentenyl diphosphate from 1-deoxy-D-xylulose 5-phosphate: step 4/6. Its function is as follows. Involved in the biosynthesis of isopentenyl diphosphate (IPP) and dimethylallyl diphosphate (DMAPP), two major building blocks of isoprenoid compounds. Catalyzes the conversion of 4-diphosphocytidyl-2-C-methyl-D-erythritol 2-phosphate (CDP-ME2P) to 2-C-methyl-D-erythritol 2,4-cyclodiphosphate (ME-CPP) with a corresponding release of cytidine 5-monophosphate (CMP). The polypeptide is 2-C-methyl-D-erythritol 2,4-cyclodiphosphate synthase (Actinobacillus pleuropneumoniae serotype 5b (strain L20)).